A 92-amino-acid chain; its full sequence is Ribonuclease P protein component 1 (92 aa).

It belongs to the eukaryotic/archaeal RNase P protein component 1 family. As to quaternary structure, consists of a catalytic RNA component and at least 4-5 protein subunits.

The protein resides in the cytoplasm. The catalysed reaction is Endonucleolytic cleavage of RNA, removing 5'-extranucleotides from tRNA precursor.. In terms of biological role, part of ribonuclease P, a protein complex that generates mature tRNA molecules by cleaving their 5'-ends. This chain is Ribonuclease P protein component 1, found in Desulfurococcus amylolyticus (strain DSM 18924 / JCM 16383 / VKM B-2413 / 1221n) (Desulfurococcus kamchatkensis).